We begin with the raw amino-acid sequence, 331 residues long: Phenylalanine--tRNA ligase alpha subunit (331 aa).

Residue E252 participates in Mg(2+) binding.

It belongs to the class-II aminoacyl-tRNA synthetase family. Phe-tRNA synthetase alpha subunit type 1 subfamily. Tetramer of two alpha and two beta subunits. Mg(2+) serves as cofactor.

It localises to the cytoplasm. It catalyses the reaction tRNA(Phe) + L-phenylalanine + ATP = L-phenylalanyl-tRNA(Phe) + AMP + diphosphate + H(+). This chain is Phenylalanine--tRNA ligase alpha subunit, found in Xanthomonas axonopodis pv. citri (strain 306).